The following is a 447-amino-acid chain: Phosphoglucosamine mutase (447 aa).

Serine 100 serves as the catalytic Phosphoserine intermediate. The Mg(2+) site is built by serine 100, aspartate 240, aspartate 242, and aspartate 244. The residue at position 100 (serine 100) is a Phosphoserine.

Belongs to the phosphohexose mutase family. It depends on Mg(2+) as a cofactor. Post-translationally, activated by phosphorylation.

It carries out the reaction alpha-D-glucosamine 1-phosphate = D-glucosamine 6-phosphate. Its function is as follows. Catalyzes the conversion of glucosamine-6-phosphate to glucosamine-1-phosphate. The polypeptide is Phosphoglucosamine mutase (Anoxybacillus flavithermus (strain DSM 21510 / WK1)).